Here is a 739-residue protein sequence, read N- to C-terminus: Phosphoribosylformylglycinamidine synthase subunit PurL (739 aa).

Histidine 54 is a catalytic residue. ATP-binding residues include tyrosine 57 and lysine 96. Glutamate 98 contacts Mg(2+). Residues 99–102 and arginine 121 contribute to the substrate site; that span reads SHNH. The Proton acceptor role is filled by histidine 100. Aspartate 122 contacts Mg(2+). Glutamine 245 provides a ligand contact to substrate. Mg(2+) is bound at residue aspartate 275. 319–321 lines the substrate pocket; the sequence is ESQ. Residues aspartate 504 and glycine 541 each contribute to the ATP site. Residue asparagine 542 coordinates Mg(2+). Serine 544 is a substrate binding site.

The protein belongs to the FGAMS family. In terms of assembly, monomer. Part of the FGAM synthase complex composed of 1 PurL, 1 PurQ and 2 PurS subunits.

The protein localises to the cytoplasm. It carries out the reaction N(2)-formyl-N(1)-(5-phospho-beta-D-ribosyl)glycinamide + L-glutamine + ATP + H2O = 2-formamido-N(1)-(5-O-phospho-beta-D-ribosyl)acetamidine + L-glutamate + ADP + phosphate + H(+). It functions in the pathway purine metabolism; IMP biosynthesis via de novo pathway; 5-amino-1-(5-phospho-D-ribosyl)imidazole from N(2)-formyl-N(1)-(5-phospho-D-ribosyl)glycinamide: step 1/2. Part of the phosphoribosylformylglycinamidine synthase complex involved in the purines biosynthetic pathway. Catalyzes the ATP-dependent conversion of formylglycinamide ribonucleotide (FGAR) and glutamine to yield formylglycinamidine ribonucleotide (FGAM) and glutamate. The FGAM synthase complex is composed of three subunits. PurQ produces an ammonia molecule by converting glutamine to glutamate. PurL transfers the ammonia molecule to FGAR to form FGAM in an ATP-dependent manner. PurS interacts with PurQ and PurL and is thought to assist in the transfer of the ammonia molecule from PurQ to PurL. In Lactococcus lactis subsp. lactis (strain IL1403) (Streptococcus lactis), this protein is Phosphoribosylformylglycinamidine synthase subunit PurL.